A 620-amino-acid chain; its full sequence is Protein VERNALIZATION INSENSITIVE 3 (620 aa).

A PHD-type zinc finger spans residues 148–206 (RCSCCICQKFDDNKDPSLWLTCDACGSSCHLECGLKQDRYGIGSDDLDGRFYCAYCGKD). A Nuclear localization signal motif is present at residues 213–220 (WRKQVKVA). Residues 314–412 (DKMTVRVEEI…ELRFTTLKDD (99 aa)) form the Fibronectin type-III domain. Residues 411–466 (DDGDEAGDQQSPLTNSSSGLCSNPSLPEDESNNVNKSCSKGNGDKDNTEHCSAGEV) form a disordered region. Positions 418–435 (DQQSPLTNSSSGLCSNPS) are enriched in polar residues. Positions 493–500 (CKRDIYKG) match the Nuclear localization signal motif. The VIN3-Interacting Domain (VID) stretch occupies residues 512–620 (TVSLNEKPEI…PAGICLKLWH (109 aa)).

In terms of assembly, interacts with VIL1 and VIL2. The heterodimer made of VIN3 and VIL1 is required for establishing the vernalization-induced epigenetic silencing of FLC. Component of the plant homeodomain / polycomb repressive complex 2 (PHD-PRC2) large complex during prolonged cold, composed of core PRC2 components (VRN2, EZA1, FIE and MSI1), and three related PHD finger proteins (VIL1, VIL2 and VIN3) that mediates histone H3 trimethylation on 'Lys-27' (H3K27me3). As to expression, expressed in shoot and root apices. Displays the same pattern of expression as FLC.

Its subcellular location is the nucleus. The protein resides in the nucleus speckle. Functionally, plays a central role in vernalization by mediating the initial transcriptional repression of the homeotic gene FLC, a floral repressor, after a cold treatment. However, due to its transient expression, it cannot maintain repression of FLC, which is then maintained by Polycomb Group complexes containing VRN2 throughout development. Required to deacetylate histones on the FLC promoter. Together with VIL1, required during vernalization for the modifications of FLC and FLM chromatin that are associated with an epigenetically silenced state (e.g. chromatin modifications, histone deacetylation, and trimethylated H3 'Lys-4' H3K4me3 and 'Lys-27' H3K27me3) and with acquisition of competence to flower. This is Protein VERNALIZATION INSENSITIVE 3 (VIN3) from Arabidopsis thaliana (Mouse-ear cress).